The sequence spans 495 residues: Siroheme synthase 2 (495 aa).

Positions 1-205 (MDHYPIFLNL…GREREAEQAM (205 aa)) are precorrin-2 dehydrogenase /sirohydrochlorin ferrochelatase. NAD(+) contacts are provided by residues 22 to 23 (ET) and 43 to 44 (PD). The residue at position 130 (Ser-130) is a Phosphoserine. A uroporphyrinogen-III C-methyltransferase region spans residues 220-495 (GEVYLVGAGP…HPAPADTEQA (276 aa)). Pro-229 contributes to the S-adenosyl-L-methionine binding site. Asp-252 acts as the Proton acceptor in catalysis. The active-site Proton donor is the Lys-274. Residues 305–307 (GGD), Ile-310, 335–336 (TA), Met-387, and Ala-416 each bind S-adenosyl-L-methionine. Residues 471–495 (FPEHGCLRGEPRPTRHPAPADTEQA) form a disordered region.

This sequence in the N-terminal section; belongs to the precorrin-2 dehydrogenase / sirohydrochlorin ferrochelatase family. It in the C-terminal section; belongs to the precorrin methyltransferase family.

It catalyses the reaction uroporphyrinogen III + 2 S-adenosyl-L-methionine = precorrin-2 + 2 S-adenosyl-L-homocysteine + H(+). The catalysed reaction is precorrin-2 + NAD(+) = sirohydrochlorin + NADH + 2 H(+). The enzyme catalyses siroheme + 2 H(+) = sirohydrochlorin + Fe(2+). The protein operates within cofactor biosynthesis; adenosylcobalamin biosynthesis; precorrin-2 from uroporphyrinogen III: step 1/1. Its pathway is cofactor biosynthesis; adenosylcobalamin biosynthesis; sirohydrochlorin from precorrin-2: step 1/1. It participates in porphyrin-containing compound metabolism; siroheme biosynthesis; precorrin-2 from uroporphyrinogen III: step 1/1. It functions in the pathway porphyrin-containing compound metabolism; siroheme biosynthesis; siroheme from sirohydrochlorin: step 1/1. The protein operates within porphyrin-containing compound metabolism; siroheme biosynthesis; sirohydrochlorin from precorrin-2: step 1/1. Functionally, multifunctional enzyme that catalyzes the SAM-dependent methylations of uroporphyrinogen III at position C-2 and C-7 to form precorrin-2 via precorrin-1. Then it catalyzes the NAD-dependent ring dehydrogenation of precorrin-2 to yield sirohydrochlorin. Finally, it catalyzes the ferrochelation of sirohydrochlorin to yield siroheme. The protein is Siroheme synthase 2 of Halorhodospira halophila (strain DSM 244 / SL1) (Ectothiorhodospira halophila (strain DSM 244 / SL1)).